We begin with the raw amino-acid sequence, 367 residues long: Mating-type protein ALPHA2 (367 aa).

A DNA-binding region (homeobox; TALE-type) is located at residues 273-338; it reads GADAIDSEKL…NKRRTGAKKR (66 aa).

This sequence belongs to the TALE/M-ATYP homeobox family. In terms of assembly, forms a heterodimer with A1.

The protein localises to the nucleus. In terms of biological role, mating type proteins are sequence specific DNA-binding proteins that act as master switches in yeast differentiation by controlling gene expression in a cell type-specific fashion. Transcriptional corepressor that acts in conjunction with A1 to repress transcription of haploid-specific genes. This Yarrowia lipolytica (strain CLIB 122 / E 150) (Yeast) protein is Mating-type protein ALPHA2 (MATB2).